A 135-amino-acid polypeptide reads, in one-letter code: ATP synthase epsilon chain (135 aa).

Over residues 90 to 103 the composition is skewed to basic and acidic residues; the sequence is DVRRAESAKERAES. A disordered region spans residues 90–115; it reads DVRRAESAKERAESHLNNNDEDTDIN.

It belongs to the ATPase epsilon chain family. In terms of assembly, F-type ATPases have 2 components, CF(1) - the catalytic core - and CF(0) - the membrane proton channel. CF(1) has five subunits: alpha(3), beta(3), gamma(1), delta(1), epsilon(1). CF(0) has three main subunits: a, b and c.

It localises to the cell membrane. Functionally, produces ATP from ADP in the presence of a proton gradient across the membrane. The chain is ATP synthase epsilon chain from Staphylococcus carnosus (strain TM300).